The chain runs to 245 residues: Probable phosphatase KPK_3500 (245 aa).

Zn(2+) contacts are provided by His-7, His-9, His-15, His-40, Glu-73, His-101, His-131, Asp-192, and His-194.

This sequence belongs to the PHP family. Homotrimer. It depends on Zn(2+) as a cofactor.

The polypeptide is Probable phosphatase KPK_3500 (Klebsiella pneumoniae (strain 342)).